The following is a 137-amino-acid chain: Protein CTLA-2-alpha (137 aa).

The N-terminal stretch at 1 to 27 (MMVSICEQKLQHFSAVFLLILCLGMMS) is a signal peptide. Tandem repeats lie at residues 39–41 (EWK) and 42–44 (EWK). Residues 39 to 44 (EWKEWK) are 2 X 3 AA tandem repeats of E-W-K. The tract at residues 114-137 (APDLPEYEDLGKNSYLTPGRAQPE) is disordered.

This sequence to the propeptide regions of cysteine proteases.

The protein resides in the secreted. Functionally, not known, expressed in activated T-cell. This Mus musculus (Mouse) protein is Protein CTLA-2-alpha (Ctla2a).